Consider the following 279-residue polypeptide: Tryptophan synthase alpha chain (279 aa).

Residues glutamate 50 and aspartate 61 each act as proton acceptor in the active site.

Belongs to the TrpA family. In terms of assembly, tetramer of two alpha and two beta chains.

It carries out the reaction (1S,2R)-1-C-(indol-3-yl)glycerol 3-phosphate + L-serine = D-glyceraldehyde 3-phosphate + L-tryptophan + H2O. Its pathway is amino-acid biosynthesis; L-tryptophan biosynthesis; L-tryptophan from chorismate: step 5/5. In terms of biological role, the alpha subunit is responsible for the aldol cleavage of indoleglycerol phosphate to indole and glyceraldehyde 3-phosphate. In Brucella suis biovar 1 (strain 1330), this protein is Tryptophan synthase alpha chain.